The primary structure comprises 229 residues: Mediator of RNA polymerase II transcription subunit 7 (229 aa).

Belongs to the Mediator complex subunit 7 family. As to quaternary structure, component of the Mediator complex.

It localises to the nucleus. Component of the Mediator complex, a coactivator involved in the regulated transcription of nearly all RNA polymerase II-dependent genes. Mediator functions as a bridge to convey information from gene-specific regulatory proteins to the basal RNA polymerase II transcription machinery. Mediator is recruited to promoters by direct interactions with regulatory proteins and serves as a scaffold for the assembly of a functional preinitiation complex with RNA polymerase II and the general transcription factors. This is Mediator of RNA polymerase II transcription subunit 7 (med7) from Xenopus tropicalis (Western clawed frog).